The sequence spans 233 residues: Small ribosomal subunit protein uS5 (233 aa).

Polar residues predominate over residues 1-13 (MAEETQNTVATES). Residues 1–40 (MAEETQNTVATESNNEDRKGRRGQRGEGRRGERRNRREEN) form a disordered region. Basic and acidic residues predominate over residues 15–40 (NEDRKGRRGQRGEGRRGERRNRREEN). Residues 45–108 (LLDRVVTINR…LDAKKHMFSV (64 aa)) form the S5 DRBM domain.

The protein belongs to the universal ribosomal protein uS5 family. As to quaternary structure, part of the 30S ribosomal subunit. Contacts proteins S4 and S8.

With S4 and S12 plays an important role in translational accuracy. Functionally, located at the back of the 30S subunit body where it stabilizes the conformation of the head with respect to the body. In Bifidobacterium longum (strain NCC 2705), this protein is Small ribosomal subunit protein uS5.